The sequence spans 86 residues: Small ribosomal subunit protein bS20 (86 aa).

Belongs to the bacterial ribosomal protein bS20 family.

Functionally, binds directly to 16S ribosomal RNA. This Exiguobacterium sibiricum (strain DSM 17290 / CCUG 55495 / CIP 109462 / JCM 13490 / 255-15) protein is Small ribosomal subunit protein bS20.